The following is a 112-amino-acid chain: Integration host factor subunit alpha (112 aa).

The protein belongs to the bacterial histone-like protein family. Heterodimer of an alpha and a beta chain.

This protein is one of the two subunits of integration host factor, a specific DNA-binding protein that functions in genetic recombination as well as in transcriptional and translational control. The sequence is that of Integration host factor subunit alpha from Rhizobium etli (strain ATCC 51251 / DSM 11541 / JCM 21823 / NBRC 15573 / CFN 42).